The primary structure comprises 315 residues: DNA-directed RNA polymerase subunit alpha (315 aa).

Residues 1-228 (MIEIEKPKIE…EHLNLFIDLS (228 aa)) are alpha N-terminal domain (alpha-NTD). The tract at residues 245–315 (KEKVLEMTIE…LGLSLAPSED (71 aa)) is alpha C-terminal domain (alpha-CTD).

The protein belongs to the RNA polymerase alpha chain family. As to quaternary structure, homodimer. The RNAP catalytic core consists of 2 alpha, 1 beta, 1 beta' and 1 omega subunit. When a sigma factor is associated with the core the holoenzyme is formed, which can initiate transcription.

It catalyses the reaction RNA(n) + a ribonucleoside 5'-triphosphate = RNA(n+1) + diphosphate. In terms of biological role, DNA-dependent RNA polymerase catalyzes the transcription of DNA into RNA using the four ribonucleoside triphosphates as substrates. The chain is DNA-directed RNA polymerase subunit alpha from Acetivibrio thermocellus (strain ATCC 27405 / DSM 1237 / JCM 9322 / NBRC 103400 / NCIMB 10682 / NRRL B-4536 / VPI 7372) (Clostridium thermocellum).